A 743-amino-acid polypeptide reads, in one-letter code: DEAD-box ATP-dependent RNA helicase 3B, chloroplastic (743 aa).

A chloroplast-targeting transit peptide spans 1 to 37; the sequence is MASLTLPALALALSNPGAVRLRAAAFRCWALRRRGWA. A disordered region spans residues 60 to 79; it reads GSDDEDGEGPYGSDADEGFE. Residues 61-79 are compositionally biased toward acidic residues; that stretch reads SDDEDGEGPYGSDADEGFE. The Q motif motif lies at 88-116; the sequence is LAIARLGLPDELVATLEKRGITHLFPIQR. The Helicase ATP-binding domain maps to 119–295; the sequence is LIPALEGRDL…RRYLNNPLTI (177 aa). 132-139 contacts ATP; sequence AKTGTGKT. The DEAD box signature appears at 243-246; the sequence is DEAD. One can recognise a Helicase C-terminal domain in the interval 324–469; sequence VLSDLITVYA…ISPPSIEEVL (146 aa). A disordered region spans residues 606–719; that stretch reads LTKISKLPAL…RSSSFGGRES (114 aa). Residues 642 to 653 are compositionally biased toward gly residues; that stretch reads GGGASRGRGGWD. Residues 657–671 show a composition bias toward basic and acidic residues; sequence EDRFRRGGRSLRSDN. Over residues 688–719 the composition is skewed to low complexity; the sequence is RSSSFGSRSSSYSSRGSPSFGGRSSSFGGRES. The CCHC-type zinc finger occupies 725–742; sequence GACFNCGESGHRATDCPN.

It belongs to the DEAD box helicase family. DDX21/DDX50 subfamily.

The protein resides in the plastid. The protein localises to the chloroplast stroma. The enzyme catalyses ATP + H2O = ADP + phosphate + H(+). Its function is as follows. Nuclear genome-encoded factor involved in ribosome biogenesis in chloroplasts. Binds specific group II introns in chloroplasts and facilitates their splicing. Is required for rRNA maturation in plastids and may contribute to the assembly of the large (50S) ribosomal subunit. Required for normal development of chloroplasts. This chain is DEAD-box ATP-dependent RNA helicase 3B, chloroplastic, found in Zea mays (Maize).